The following is a 491-amino-acid chain: NADH-ubiquinone oxidoreductase chain 2 (491 aa).

14 helical membrane-spanning segments follow: residues Met11–Ile31, Val38–Ile58, Glu74–Phe94, Ile106–Glu126, Asn129–Leu149, Leu161–Ile181, Ile210–Leu230, Gly238–Ile258, Ala270–Ile290, Leu298–Ala318, Val330–Phe350, Gly375–Phe395, Val411–Lys433, and Ile463–Val483.

This sequence belongs to the complex I subunit 2 family.

The protein localises to the mitochondrion inner membrane. It catalyses the reaction a ubiquinone + NADH + 5 H(+)(in) = a ubiquinol + NAD(+) + 4 H(+)(out). In terms of biological role, core subunit of the mitochondrial membrane respiratory chain NADH dehydrogenase (Complex I) that is believed to belong to the minimal assembly required for catalysis. Complex I functions in the transfer of electrons from NADH to the respiratory chain. The immediate electron acceptor for the enzyme is believed to be ubiquinone. The protein is NADH-ubiquinone oxidoreductase chain 2 (nad2) of Dictyostelium citrinum (Slime mold).